Consider the following 389-residue polypeptide: Probable peptide chain release factor 1, mitochondrial (389 aa).

Q259 is modified (N5-methylglutamine).

This sequence belongs to the prokaryotic/mitochondrial release factor family. Methylation of glutamine in the GGQ triplet is conserved from bacteria to mammals.

It is found in the mitochondrion. Its function is as follows. Mitochondrial peptide chain release factor that directs the termination of translation in response to the peptide chain termination codons UAA and UAG. The polypeptide is Probable peptide chain release factor 1, mitochondrial (Caenorhabditis elegans).